The chain runs to 140 residues: Nucleoside diphosphate kinase (140 aa).

Positions 11, 59, 87, 93, 104, and 114 each coordinate ATP. His117 functions as the Pros-phosphohistidine intermediate in the catalytic mechanism.

The protein belongs to the NDK family. Homotetramer. Mg(2+) is required as a cofactor.

It is found in the cytoplasm. The enzyme catalyses a 2'-deoxyribonucleoside 5'-diphosphate + ATP = a 2'-deoxyribonucleoside 5'-triphosphate + ADP. The catalysed reaction is a ribonucleoside 5'-diphosphate + ATP = a ribonucleoside 5'-triphosphate + ADP. Major role in the synthesis of nucleoside triphosphates other than ATP. The ATP gamma phosphate is transferred to the NDP beta phosphate via a ping-pong mechanism, using a phosphorylated active-site intermediate. The sequence is that of Nucleoside diphosphate kinase from Bartonella tribocorum (strain CIP 105476 / IBS 506).